Here is a 613-residue protein sequence, read N- to C-terminus: MERSWYWRVALVVAVAILSIYQLVPSWFYFKLPPDQRNTEAYDTSVPGWAPDAKHHLNLGLDLQGGILLSMGVDVDRAVKTKVARRADEIGEFLKGKNVAFTGTKVVGGGAQVEVSAANPGEVKDAVLGSTGYSEEMYSPGGAPDGAVRFAFKDSVLRDFREKAVKQAEKVIRNRVDKWGVTEPDIKTKANNQIQVQLPGFKDPEKAKELLGRTAQLEFKIADDENPVLDQVRTQLPQCQGDRQGLSLPLPESGCWTVEPVELPSGGSRAATMVAANTRTELEKVITEKLNPLLDPQKNVVGIGEGQVGQGPIKTTYYRTYLLRAKTELTGDYIADAAVAIDQSDTLQRGRPVVSFKMSPEGARLMDKLTSENMRRRMATVLDDKVETAPYIQGRISSNGQITLGSGRNQQDMFDEANGIALVLKAGALPAPVTITEERTVGATLGPELVRKGTLAALVGLALVVVFMVVYYRGTGLVADVALALNGLLVLAVMSMIGTTLTLPGIAGFVLTLGMAVDANVLINERIREEMRAGRNVRQSVQLGYDRVFWTIVDSHVTTLVAGVVLFQYGSGPIRGFAVTLIIGLVASMFTSIVVTRVIMEYFTRHDTARLSV.

6 helical membrane-spanning segments follow: residues 10 to 30, 452 to 472, 477 to 497, 503 to 523, 548 to 568, and 576 to 596; these read ALVVAVAILSIYQLVPSWFYF, KGTLAALVGLALVVVFMVVYY, LVADVALALNGLLVLAVMSMI, LPGIAGFVLTLGMAVDANVLI, VFWTIVDSHVTTLVAGVVLFQ, and GFAVTLIIGLVASMFTSIVVT.

The protein belongs to the SecD/SecF family. SecD subfamily. As to quaternary structure, forms a complex with SecF. Part of the essential Sec protein translocation apparatus which comprises SecA, SecYEG and auxiliary proteins SecDF-YajC and YidC.

It is found in the cell inner membrane. Part of the Sec protein translocase complex. Interacts with the SecYEG preprotein conducting channel. SecDF uses the proton motive force (PMF) to complete protein translocation after the ATP-dependent function of SecA. The chain is Protein translocase subunit SecD from Anaeromyxobacter dehalogenans (strain 2CP-C).